Reading from the N-terminus, the 199-residue chain is Nucleoid occlusion factor SlmA (199 aa).

The HTH tetR-type domain occupies 11–71 (ERRQQVLTVL…ALIDNLEAHL (61 aa)). Residues 34–53 (TTARIAAEVGVSEAALYRYY) constitute a DNA-binding region (H-T-H motif).

The protein belongs to the nucleoid occlusion factor SlmA family. As to quaternary structure, homodimer. Interacts with FtsZ.

It is found in the cytoplasm. It localises to the nucleoid. Functionally, required for nucleoid occlusion (NO) phenomenon, which prevents Z-ring formation and cell division over the nucleoid. Acts as a DNA-associated cell division inhibitor that binds simultaneously chromosomal DNA and FtsZ, and disrupts the assembly of FtsZ polymers. SlmA-DNA-binding sequences (SBS) are dispersed on non-Ter regions of the chromosome, preventing FtsZ polymerization at these regions. The chain is Nucleoid occlusion factor SlmA from Pasteurella multocida (strain Pm70).